Reading from the N-terminus, the 238-residue chain is tRNA (guanine-N(7)-)-methyltransferase (238 aa).

Glutamate 70, aspartate 95, aspartate 122, and aspartate 145 together coordinate S-adenosyl-L-methionine. The active site involves aspartate 145. Substrate is bound by residues lysine 149, aspartate 181, and 216-219 (TKFE).

This sequence belongs to the class I-like SAM-binding methyltransferase superfamily. TrmB family.

The enzyme catalyses guanosine(46) in tRNA + S-adenosyl-L-methionine = N(7)-methylguanosine(46) in tRNA + S-adenosyl-L-homocysteine. Its pathway is tRNA modification; N(7)-methylguanine-tRNA biosynthesis. Catalyzes the formation of N(7)-methylguanine at position 46 (m7G46) in tRNA. The polypeptide is tRNA (guanine-N(7)-)-methyltransferase (Neisseria meningitidis serogroup C / serotype 2a (strain ATCC 700532 / DSM 15464 / FAM18)).